We begin with the raw amino-acid sequence, 611 residues long: Serine/arginine repetitive matrix protein 4 (611 aa).

Disordered stretches follow at residues 38–248 (ARKP…PLQM) and 263–611 (SAAD…STRR). Composition is skewed to basic residues over residues 107–123 (RGKKKKKKSTRKKRRRS) and 131–189 (VKKK…HRCP). Residues 190–202 (SRSQSSESRPSSC) show a composition bias toward low complexity. Residues 203–216 (ESRHRGRSPEEGQK) are compositionally biased toward basic and acidic residues. Basic residues predominate over residues 217-226 (SRRRHSRRCS). Positions 270 to 290 (KTASPLTTSRGRSQEYDSGND) are enriched in polar residues. Residues 291 to 301 (TSSPPSTQTSS) show a composition bias toward low complexity. Positions 322–341 (LNSGNTSDSGNSFTTSSPQN) are enriched in polar residues. Low complexity-rich tracts occupy residues 390–422 (SRSSSYASTRSSSHSSRSPNPRASPRYTQSRST) and 430–461 (SRSPSYSSKSGKRSPPSRSSRSRRSPSYSRYS). Residues 462 to 482 (PSRERDPKYSEKDSQQRERER) are compositionally biased toward basic and acidic residues. Positions 483–498 (ARRRRRSYSPMRKRRR) are enriched in basic residues. A compositionally biased stretch (basic and acidic residues) spans 499 to 508 (DSPSHLEARR). Positions 522–549 (PSPSSSGSLSSTSSWYSSSSSRSASRSY) are enriched in low complexity. The span at 550–564 (SRSRSRSRSRRRSRT) shows a compositional bias: basic residues. Positions 565–580 (RTSSSSSSRSPSPGSR) are enriched in low complexity. Positions 581 to 595 (SRSRSRSRSRSRSRS) are enriched in basic residues. Positions 596-611 (QSRSYSSADSYSSTRR) are enriched in low complexity.

It belongs to the nSR100 family. Phosphorylated. Specifically expressed in neuronal cells (at protein level). Expressed in the cerebellum.

Its subcellular location is the nucleus. In terms of biological role, splicing factor specifically required for neural cell differentiation. Acts in conjunction with nPTB/PTBP2 by binding directly to its regulated target transcripts and promotes neural-specific exon inclusion in many genes that function in neural cell differentiation. Required to promote the inclusion of neural-specific exon 10 in nPTB/PTBP2, leading to increased expression of neural-specific nPTB/PTBP2. Also promotes the inclusion of exon 16 in DAAM1 in neuron extracts. Promotes alternative splicing of REST transcripts to produce REST isoform 3 (REST4) with greatly reduced repressive activity, thereby activating expression of REST targets in neural cells. Plays an important role during embryonic development as well as in the proper functioning of the adult nervous system. Regulates alternative splicing events in genes with important neuronal functions. This Homo sapiens (Human) protein is Serine/arginine repetitive matrix protein 4 (SRRM4).